The sequence spans 127 residues: Acetylcholine receptor subunit alpha (127 aa).

Residues 1-127 (ADGIFAIDQF…YFIVNVIIPC (127 aa)) are Extracellular-facing. The cysteines at positions 33 and 47 are disulfide-linked. Asn46 and Asn94 each carry an N-linked (GlcNAc...) asparagine glycan. A disulfide bridge links Cys97 with Cys98.

This sequence belongs to the ligand-gated ion channel (TC 1.A.9) family. Acetylcholine receptor (TC 1.A.9.1) subfamily. Alpha-1/CHRNA1 sub-subfamily. In terms of assembly, one of the alpha chains that assemble within the acetylcholine receptor, a pentamer of two alpha chains, a beta, a delta, and a gamma or epsilon chains.

It localises to the postsynaptic cell membrane. It is found in the cell membrane. It catalyses the reaction K(+)(in) = K(+)(out). It carries out the reaction Na(+)(in) = Na(+)(out). Its function is as follows. Upon acetylcholine binding, the AChR responds by an extensive change in conformation that affects all subunits and leads to opening of an ion-conducting channel across the plasma membrane. Does not bind alpha-bungarotoxin. The chain is Acetylcholine receptor subunit alpha (CHRNA1) from Natrix tessellata (Dice snake).